The following is a 344-amino-acid chain: Mitochondrial genome maintenance exonuclease 1 (344 aa).

Catalysis depends on residues Asp238, Asp251, and Lys253. Ser343 bears the Phosphoserine mark.

Belongs to the MGME1 family.

It localises to the mitochondrion. In terms of biological role, metal-dependent single-stranded DNA (ssDNA) exonuclease involved in mitochondrial genome maintenance. Has preference for 5'-3' exonuclease activity but is also capable of endonuclease activity on linear substrates. Necessary for maintenance of proper 7S DNA levels. Probably involved in mitochondrial DNA (mtDNA) repair, possibly via the processing of displaced DNA containing Okazaki fragments during RNA-primed DNA synthesis on the lagging strand or via processing of DNA flaps during long-patch base excision repair. Specifically binds 5-hydroxymethylcytosine (5hmC)-containing DNA in stem cells. The protein is Mitochondrial genome maintenance exonuclease 1 of Homo sapiens (Human).